A 359-amino-acid chain; its full sequence is UPF0283 membrane protein RL2646 (359 aa).

The tract at residues 1-48 (MSKPPSDPPRRAPAAFIYEDEATERRDNGRQGGERRKPESFSEHIVVT) is disordered. Positions 23-42 (TERRDNGRQGGERRKPESFS) are enriched in basic and acidic residues. 2 consecutive transmembrane segments (helical) span residues 77-97 (FGKI…GLWT) and 111-131 (LGYA…ALVI).

The protein belongs to the UPF0283 family.

It is found in the cell inner membrane. This Rhizobium johnstonii (strain DSM 114642 / LMG 32736 / 3841) (Rhizobium leguminosarum bv. viciae) protein is UPF0283 membrane protein RL2646.